We begin with the raw amino-acid sequence, 320 residues long: MLLCFRFGNQSMKRENFTLITDFVFQGFSSFHEQQITLFGVFLALYILTLAGNIIIVTIIRMDLHLHTPMYFFLSMLSTSETVYTLVILPRMLSSLVGMSQPISLAGCATQMFFFVTFGITNCFLLTAMGYDRYVAICNPLRYMVIMNKRLRIQLVLGACSIGLIVAITQVTSVFRLPFCARKVPHFFCDIRPVMKLSCIDTTVNEILTLIISVLVLVVPMGLVFISYVLIISTILKIASVEGRKKAFATCASHLTVVIVHYSCASIAYLKPKSENTREHDQLISVTYTVITPLLNPVVYTLRNKEVKDALCRAVGGKFS.

Over 1–36 (MLLCFRFGNQSMKRENFTLITDFVFQGFSSFHEQQI) the chain is Extracellular. Asn-9 and Asn-16 each carry an N-linked (GlcNAc...) asparagine glycan. A helical membrane pass occupies residues 37–57 (TLFGVFLALYILTLAGNIIIV). Residues 58-65 (TIIRMDLH) are Cytoplasmic-facing. The chain crosses the membrane as a helical span at residues 66-86 (LHTPMYFFLSMLSTSETVYTL). Topologically, residues 87 to 110 (VILPRMLSSLVGMSQPISLAGCAT) are extracellular. Cysteines 108 and 199 form a disulfide. Residues 111–131 (QMFFFVTFGITNCFLLTAMGY) traverse the membrane as a helical segment. Residues 132-150 (DRYVAICNPLRYMVIMNKR) lie on the Cytoplasmic side of the membrane. The chain crosses the membrane as a helical span at residues 151–171 (LRIQLVLGACSIGLIVAITQV). Topologically, residues 172–207 (TSVFRLPFCARKVPHFFCDIRPVMKLSCIDTTVNEI) are extracellular. A helical transmembrane segment spans residues 208 to 227 (LTLIISVLVLVVPMGLVFIS). The Cytoplasmic portion of the chain corresponds to 228 to 247 (YVLIISTILKIASVEGRKKA). Residues 248 to 268 (FATCASHLTVVIVHYSCASIA) form a helical membrane-spanning segment. The Extracellular portion of the chain corresponds to 269–281 (YLKPKSENTREHD). The helical transmembrane segment at 282-302 (QLISVTYTVITPLLNPVVYTL) threads the bilayer. The Cytoplasmic portion of the chain corresponds to 303–320 (RNKEVKDALCRAVGGKFS).

It belongs to the G-protein coupled receptor 1 family.

The protein resides in the cell membrane. Its function is as follows. Odorant receptor. The sequence is that of Olfactory receptor 10J1 (OR10J1) from Homo sapiens (Human).